A 213-amino-acid polypeptide reads, in one-letter code: Protein MobE (213 aa).

The protein is Protein MobE (mobE) of Acidithiobacillus ferrooxidans (Thiobacillus ferrooxidans).